Here is a 377-residue protein sequence, read N- to C-terminus: DNA methyltransferase CcrM (377 aa).

The RAMA domain occupies 271 to 373 (LGKAELTVMT…LRKIIREQMA (103 aa)).

This sequence belongs to the N(4)/N(6)-methyltransferase family.

It catalyses the reaction a 2'-deoxyadenosine in DNA + S-adenosyl-L-methionine = an N(6)-methyl-2'-deoxyadenosine in DNA + S-adenosyl-L-homocysteine + H(+). Functionally, a beta subtype methylase that recognizes the double-stranded sequence 5'-GANTC-3' and methylates on A-2 on both strands. Overexpression from a moderate-copy number plasmid (10-12 copies/cell) leads to enlarged, branched cells, many with 3-5 genome equivalents. Contributes to the accurate cell-cycle control of DNA replication and cellular morphology. The polypeptide is DNA methyltransferase CcrM (Brucella abortus (strain 2308)).